Consider the following 446-residue polypeptide: tRNA-2-methylthio-N(6)-dimethylallyladenosine synthase (446 aa).

Residues 3–120 (QKLFIKTYGC…LPEMVNSVAH (118 aa)) form the MTTase N-terminal domain. Residues Cys12, Cys49, Cys83, Cys157, Cys161, and Cys164 each coordinate [4Fe-4S] cluster. One can recognise a Radical SAM core domain in the interval 143–375 (SSEGASAFVS…QQRILQFAQD (233 aa)). A TRAM domain is found at 378-442 (RKMVGSTQRI…PNSLRGERVD (65 aa)).

Belongs to the methylthiotransferase family. MiaB subfamily. As to quaternary structure, monomer. Requires [4Fe-4S] cluster as cofactor.

The protein localises to the cytoplasm. The catalysed reaction is N(6)-dimethylallyladenosine(37) in tRNA + (sulfur carrier)-SH + AH2 + 2 S-adenosyl-L-methionine = 2-methylsulfanyl-N(6)-dimethylallyladenosine(37) in tRNA + (sulfur carrier)-H + 5'-deoxyadenosine + L-methionine + A + S-adenosyl-L-homocysteine + 2 H(+). Functionally, catalyzes the methylthiolation of N6-(dimethylallyl)adenosine (i(6)A), leading to the formation of 2-methylthio-N6-(dimethylallyl)adenosine (ms(2)i(6)A) at position 37 in tRNAs that read codons beginning with uridine. This Hahella chejuensis (strain KCTC 2396) protein is tRNA-2-methylthio-N(6)-dimethylallyladenosine synthase.